We begin with the raw amino-acid sequence, 252 residues long: Phosphate import ATP-binding protein PstB 1 (252 aa).

Residues leucine 6 to isoleucine 247 enclose the ABC transporter domain. ATP is bound at residue glycine 38–serine 45.

Belongs to the ABC transporter superfamily. Phosphate importer (TC 3.A.1.7) family. The complex is composed of two ATP-binding proteins (PstB), two transmembrane proteins (PstC and PstA) and a solute-binding protein (PstS).

It is found in the cell membrane. The enzyme catalyses phosphate(out) + ATP + H2O = ADP + 2 phosphate(in) + H(+). Part of the ABC transporter complex PstSACB involved in phosphate import. Responsible for energy coupling to the transport system. The chain is Phosphate import ATP-binding protein PstB 1 from Streptococcus pneumoniae (strain ATCC BAA-255 / R6).